The chain runs to 1930 residues: Ankyrin repeat domain-containing protein SAT10 (1930 aa).

ANK repeat units follow at residues 840–872 (FRHT…DLEE), 878–908 (GTWN…GVLN), 920–949 (SGNT…MRGY), 959–989 (QRSS…DYSK), 993–1023 (NGAS…FSNE), 1073–1102 (SGLT…DANG), 1106–1135 (EFEA…TKTE), 1144–1174 (GRTR…QLSH), 1178–1205 (NQRT…ETET), 1206–1235 (GLQE…EINA), 1239–1268 (YGNT…RLDL), 1272–1301 (DNVN…DVNA), 1304–1333 (GGDT…KFIL), 1339–1368 (RFEN…ERDL), 1400–1429 (SGWT…GRAA), 1514–1543 (QNML…SLTP), 1548–1577 (RHGT…MLAD), 1615–1644 (MGRN…NEDL), 1651–1680 (DGWT…KIFD), and 1696–1724 (KTWT…TTSD).

Its pathway is mycotoxin biosynthesis. In terms of biological role, ankyrin repeat domain-containing protein; part of the satratoxin SC1 cluster involved in the biosynthesis of satratoxins, trichothecene mycotoxins that are associated with human food poisonings. Satratoxins are suggested to be made by products of multiple gene clusters (SC1, SC2 and SC3) that encode 21 proteins in all, including polyketide synthases, acetyltransferases, and other enzymes expected to modify the trichothecene skeleton. SC1 encodes 10 proteins, SAT1 to SAT10. The largest are SAT8, which encodes a putative polyketide synthase (PKS) with a conventional non-reducing architecture, and SAT10, a putative protein containing four ankyrin repeats and thus may be involved in protein scaffolding. The putative short-chain reductase SAT3 may assist the PKS in some capacity. SAT6 contains a secretory lipase domain and acts probably as a trichothecene esterase. SAT5 encodes a putative acetyltransferase, and so, with SAT6, may affect endogenous protection from toxicity. The probable transcription factor SAT9 may regulate the expression of the SC1 cluster. SC2 encodes proteins SAT11 to SAT16, the largest of which encodes the putative reducing PKS SAT13. SAT11 is a cytochrome P450 monooxygenase, while SAT14 and SAT16 are probable acetyltransferases. The SC2 cluster may be regulated by the transcription factor SAT15. SC3 is a small cluster that encodes 5 proteins, SAT17 to SAT21. SAT21 is a putative MFS-type transporter which may have a role in exporting secondary metabolites. The four other proteins putatively encoded in SC3 include the taurine hydroxylase-like protein SAT17, the O-methyltransferase SAT18, the acetyltransferase SAT19, and the Cys6-type zinc finger SAT20, the latter being probably involved in regulation of SC3 expression. The sequence is that of Ankyrin repeat domain-containing protein SAT10 from Stachybotrys chartarum (strain CBS 109288 / IBT 7711) (Toxic black mold).